A 549-amino-acid polypeptide reads, in one-letter code: Cation/acetate symporter ActP (549 aa).

The next 13 membrane-spanning stretches (helical) occupy residues 33 to 53 (WQAI…TYWA), 77 to 97 (LAIA…ALVF), 103 to 123 (GLIY…LIAE), 148 to 168 (ILSA…QMVG), 183 to 203 (IAVV…GMLA), 206 to 226 (WVQI…AFMV), 262 to 282 (ISAL…PHIL), 303 to 323 (GFMG…IMLV), 355 to 375 (LFLG…VAGL), 404 to 424 (VSKI…VLFE), 428 to 448 (IAFM…PIIL), 464 to 484 (GGWL…TIWV), and 493 to 513 (IFPY…GIWF).

Belongs to the sodium:solute symporter (SSF) (TC 2.A.21) family.

The protein resides in the cell inner membrane. Transports acetate. The chain is Cation/acetate symporter ActP from Salmonella arizonae (strain ATCC BAA-731 / CDC346-86 / RSK2980).